We begin with the raw amino-acid sequence, 257 residues long: UPF0246 protein YaaA (257 aa).

It belongs to the UPF0246 family.

This Salmonella arizonae (strain ATCC BAA-731 / CDC346-86 / RSK2980) protein is UPF0246 protein YaaA.